We begin with the raw amino-acid sequence, 703 residues long: Peptide transporter CstA (703 aa).

16 consecutive transmembrane segments (helical) span residues 6–26, 29–49, 87–107, 118–138, 162–182, 190–210, 221–241, 256–276, 282–302, 319–339, 374–394, 463–483, 514–534, 547–567, 574–594, and 660–680; these read TKIL…YLAL, GESV…MIGY, VLFG…GPIL, LWIL…VLFI, VAMV…AMVV, PWGL…GIYM, ASII…VIAA, LAIV…WFLL, LSTF…VLVA, GPVF…CGAI, AVAI…YFAI, LMAF…LTAV, GLLA…QGAI, FGVS…TILV, YTWV…YGGI, and AILC…CIGI.

Belongs to the peptide transporter carbon starvation (CstA) (TC 2.A.114) family.

It localises to the cell inner membrane. Its function is as follows. Involved in the uptake of dipeptides and tripeptides. May influence host-pathogen interactions. Involved in motility and agglutination, and has a role in stimulation of dendritic cells. In Campylobacter jejuni subsp. jejuni serotype O:2 (strain ATCC 700819 / NCTC 11168), this protein is Peptide transporter CstA.